The primary structure comprises 259 residues: Phosphate import ATP-binding protein PstB 2 (259 aa).

The 243-residue stretch at 12–254 (ISARGLNVHY…PKEPLTQGYI (243 aa)) folds into the ABC transporter domain. ATP is bound at residue 44–51 (GPSGCGKS).

The protein belongs to the ABC transporter superfamily. Phosphate importer (TC 3.A.1.7) family. In terms of assembly, the complex is composed of two ATP-binding proteins (PstB), two transmembrane proteins (PstC and PstA) and a solute-binding protein (PstS).

It localises to the cell inner membrane. The catalysed reaction is phosphate(out) + ATP + H2O = ADP + 2 phosphate(in) + H(+). In terms of biological role, part of the ABC transporter complex PstSACB involved in phosphate import. Responsible for energy coupling to the transport system. The chain is Phosphate import ATP-binding protein PstB 2 from Paramagnetospirillum magneticum (strain ATCC 700264 / AMB-1) (Magnetospirillum magneticum).